The primary structure comprises 162 residues: UPF0114 protein Sputw3181_3501 (162 aa).

3 helical membrane passes run 15–35, 53–73, and 136–156; these read IMAPIYLGLSLVLLGLGIKFF, LVLVTLSLIDITLVGGLIVMV, and IMWYLLIHITFVLSAFAMGYL.

This sequence belongs to the UPF0114 family.

Its subcellular location is the cell membrane. This chain is UPF0114 protein Sputw3181_3501, found in Shewanella sp. (strain W3-18-1).